The primary structure comprises 288 residues: Long chain fatty acid elongase 1 (288 aa).

7 helical membrane-spanning segments follow: residues 39–59 (FFAD…VVVF), 73–93 (LTIP…AGAV), 126–146 (WVWL…FLVL), 150–170 (PLMF…WYSH), 180–197 (GIYL…YYFL), 217–237 (IVQF…MHFT), and 247–267 (VFKL…NFFL).

The protein belongs to the ELO family.

It localises to the membrane. The enzyme catalyses (6Z,9Z,12Z)-octadecatrienoyl-CoA + malonyl-CoA + H(+) = (8Z,11Z,14Z)-3-oxoeicosatrienoyl-CoA + CO2 + CoA. It catalyses the reaction (6Z,9Z,12Z,15Z)-octadecatetraenoyl-CoA + malonyl-CoA + H(+) = (8Z,11Z,14Z,17Z)-3-oxoicosatetraenoyl-CoA + CO2 + CoA. The catalysed reaction is (9Z)-hexadecenoyl-CoA + malonyl-CoA + H(+) = 3-oxo-(11Z)-octadecenoyl-CoA + CO2 + CoA. The protein operates within lipid metabolism; fatty acid biosynthesis. Catalyzes the first and rate-limiting reaction of the four reactions that constitute the long-chain fatty acids elongation cycle. Uses malonyl-CoA to add 2 carbons per cycle to the chain of long-chain fatty acids. Condensing enzyme that catalyzes the elongation of monounsaturated (MUFA) and polyunsaturated (PUFA) fatty acids that are involved in multiple biological processes as precursors of membrane lipids and lipid mediators. In Caenorhabditis elegans, this protein is Long chain fatty acid elongase 1.